The chain runs to 158 residues: Ribosomal RNA large subunit methyltransferase H (158 aa).

S-adenosyl-L-methionine is bound by residues Leu-74, Gly-105, and 124–129 (LGPLTL).

Belongs to the RNA methyltransferase RlmH family. As to quaternary structure, homodimer.

The protein localises to the cytoplasm. The catalysed reaction is pseudouridine(1915) in 23S rRNA + S-adenosyl-L-methionine = N(3)-methylpseudouridine(1915) in 23S rRNA + S-adenosyl-L-homocysteine + H(+). In terms of biological role, specifically methylates the pseudouridine at position 1915 (m3Psi1915) in 23S rRNA. This Xylella fastidiosa (strain Temecula1 / ATCC 700964) protein is Ribosomal RNA large subunit methyltransferase H.